The primary structure comprises 507 residues: ATP synthase subunit alpha, chloroplastic (507 aa).

170-177 (GDRQTGKT) contributes to the ATP binding site.

This sequence belongs to the ATPase alpha/beta chains family. In terms of assembly, F-type ATPases have 2 components, CF(1) - the catalytic core - and CF(0) - the membrane proton channel. CF(1) has five subunits: alpha(3), beta(3), gamma(1), delta(1), epsilon(1). CF(0) has four main subunits: a, b, b' and c.

The protein localises to the plastid. The protein resides in the chloroplast thylakoid membrane. It catalyses the reaction ATP + H2O + 4 H(+)(in) = ADP + phosphate + 5 H(+)(out). Produces ATP from ADP in the presence of a proton gradient across the membrane. The alpha chain is a regulatory subunit. This Nicotiana sylvestris (Wood tobacco) protein is ATP synthase subunit alpha, chloroplastic.